We begin with the raw amino-acid sequence, 195 residues long: ATP-dependent Clp protease proteolytic subunit (195 aa).

S94 acts as the Nucleophile in catalysis. H119 is an active-site residue.

The protein belongs to the peptidase S14 family. As to quaternary structure, component of the chloroplastic Clp protease core complex.

The protein localises to the plastid. It localises to the chloroplast stroma. The enzyme catalyses Hydrolysis of proteins to small peptides in the presence of ATP and magnesium. alpha-casein is the usual test substrate. In the absence of ATP, only oligopeptides shorter than five residues are hydrolyzed (such as succinyl-Leu-Tyr-|-NHMec, and Leu-Tyr-Leu-|-Tyr-Trp, in which cleavage of the -Tyr-|-Leu- and -Tyr-|-Trp bonds also occurs).. Functionally, cleaves peptides in various proteins in a process that requires ATP hydrolysis. Has a chymotrypsin-like activity. Plays a major role in the degradation of misfolded proteins. This chain is ATP-dependent Clp protease proteolytic subunit, found in Cycas taitungensis (Prince sago).